The following is a 229-amino-acid chain: 2-C-methyl-D-erythritol 4-phosphate cytidylyltransferase (229 aa).

This sequence belongs to the IspD/TarI cytidylyltransferase family. IspD subfamily. As to quaternary structure, homodimer.

The catalysed reaction is 2-C-methyl-D-erythritol 4-phosphate + CTP + H(+) = 4-CDP-2-C-methyl-D-erythritol + diphosphate. It participates in isoprenoid biosynthesis; isopentenyl diphosphate biosynthesis via DXP pathway; isopentenyl diphosphate from 1-deoxy-D-xylulose 5-phosphate: step 2/6. Catalyzes the formation of 4-diphosphocytidyl-2-C-methyl-D-erythritol from CTP and 2-C-methyl-D-erythritol 4-phosphate (MEP). The protein is 2-C-methyl-D-erythritol 4-phosphate cytidylyltransferase of Wigglesworthia glossinidia brevipalpis.